The chain runs to 337 residues: Diacylglycerol O-acyltransferase 2-like protein 6 (337 aa).

A run of 2 helical transmembrane segments spans residues 22 to 42 (IPVY…FLLF) and 102 to 122 (YIIA…NFAT).

Belongs to the diacylglycerol acyltransferase family. As to expression, expressed in all tissues tested except pancreas.

Its subcellular location is the endoplasmic reticulum membrane. The enzyme catalyses 1,2-di-(9Z-octadecenoyl)-sn-glycerol + (9Z)-octadecenoyl-CoA = 1,2,3-tri-(9Z-octadecenoyl)-glycerol + CoA. It carries out the reaction 1-O-(9Z-octadecenyl)-glycerol + (9Z)-octadecenoyl-CoA = 1-O-(9Z-octadecyl)-3-(9Z-octadecenoyl)-glycerol + CoA. The catalysed reaction is 1-(9Z-octadecenoyl)-glycerol + (9Z)-octadecenoyl-CoA = 1,2-di-(9Z-octadecenoyl)-glycerol + CoA. Diglyceride acyltransferase that uses fatty acyl-CoA as substrate. Particularly active with oleate as a substrate. Has no wax synthase activity to produce wax esters. Able to use 1-monoalkylglycerol (1-MAkG) as an acyl acceptor for the synthesis of monoalkyl-monoacylglycerol (MAMAG). The chain is Diacylglycerol O-acyltransferase 2-like protein 6 from Homo sapiens (Human).